Reading from the N-terminus, the 408-residue chain is Elongation factor Tu, chloroplastic (408 aa).

The tr-type G domain maps to 10-214 (KPHVNIGTIG…AVDSYIPTPK (205 aa)). Residues 19–26 (GHVDHGKT) are G1. GTP is bound at residue 19–26 (GHVDHGKT). Threonine 26 lines the Mg(2+) pocket. A G2 region spans residues 60–64 (GITIN). Residues 81-84 (DCPG) are G3. Residues 81 to 85 (DCPGH) and 136 to 139 (NKED) contribute to the GTP site. The segment at 136 to 139 (NKED) is G4. Residues 174–176 (SAL) are G5.

This sequence belongs to the TRAFAC class translation factor GTPase superfamily. Classic translation factor GTPase family. EF-Tu/EF-1A subfamily.

The protein resides in the plastid. The protein localises to the chloroplast. The enzyme catalyses GTP + H2O = GDP + phosphate + H(+). Its function is as follows. GTP hydrolase that promotes the GTP-dependent binding of aminoacyl-tRNA to the A-site of ribosomes during protein biosynthesis. The sequence is that of Elongation factor Tu, chloroplastic (tufA) from Chara connivens (Convergent stonewort).